Here is a 53-residue protein sequence, read N- to C-terminus: uncharacterized protein (53 aa).

It is found in the plastid. The protein localises to the chloroplast. This is an uncharacterized protein from Guillardia theta (Cryptophyte).